Consider the following 246-residue polypeptide: Pyridoxine 5'-phosphate synthase (246 aa).

Asn12 contributes to the 3-amino-2-oxopropyl phosphate binding site. 1-deoxy-D-xylulose 5-phosphate is bound at residue 14–15; that stretch reads DH. Residue Arg23 coordinates 3-amino-2-oxopropyl phosphate. His48 acts as the Proton acceptor in catalysis. 2 residues coordinate 1-deoxy-D-xylulose 5-phosphate: Arg50 and His55. Glu75 acts as the Proton acceptor in catalysis. Thr105 serves as a coordination point for 1-deoxy-D-xylulose 5-phosphate. The active-site Proton donor is His196. 3-amino-2-oxopropyl phosphate contacts are provided by residues Gly197 and 218–219; that span reads GH.

It belongs to the PNP synthase family. Homooctamer; tetramer of dimers.

The protein localises to the cytoplasm. The catalysed reaction is 3-amino-2-oxopropyl phosphate + 1-deoxy-D-xylulose 5-phosphate = pyridoxine 5'-phosphate + phosphate + 2 H2O + H(+). The protein operates within cofactor biosynthesis; pyridoxine 5'-phosphate biosynthesis; pyridoxine 5'-phosphate from D-erythrose 4-phosphate: step 5/5. In terms of biological role, catalyzes the complicated ring closure reaction between the two acyclic compounds 1-deoxy-D-xylulose-5-phosphate (DXP) and 3-amino-2-oxopropyl phosphate (1-amino-acetone-3-phosphate or AAP) to form pyridoxine 5'-phosphate (PNP) and inorganic phosphate. In Pseudomonas syringae pv. tomato (strain ATCC BAA-871 / DC3000), this protein is Pyridoxine 5'-phosphate synthase.